The following is a 156-amino-acid chain: MQIIEGKLQLQGNERVAILTSRFNHIITDRLKEGAMDCFKRHGGDEDLLDIVLVPGAYELPLILDKLLESGKYDGVCVLGAIIRGGTPHFDYVSAEATKGIASAMLKYSMPVSFGVLTTDNIEQAIERAGSKAGNKGFEAMSTLIELLSLCQTLKG.

Residues Phe-23, 57 to 59 (AYE), and 81 to 83 (AII) contribute to the 5-amino-6-(D-ribitylamino)uracil site. A (2S)-2-hydroxy-3-oxobutyl phosphate-binding site is contributed by 86–87 (GT). His-89 (proton donor) is an active-site residue. Phe-114 provides a ligand contact to 5-amino-6-(D-ribitylamino)uracil. Residue Arg-128 participates in (2S)-2-hydroxy-3-oxobutyl phosphate binding.

Belongs to the DMRL synthase family.

The catalysed reaction is (2S)-2-hydroxy-3-oxobutyl phosphate + 5-amino-6-(D-ribitylamino)uracil = 6,7-dimethyl-8-(1-D-ribityl)lumazine + phosphate + 2 H2O + H(+). Its pathway is cofactor biosynthesis; riboflavin biosynthesis; riboflavin from 2-hydroxy-3-oxobutyl phosphate and 5-amino-6-(D-ribitylamino)uracil: step 1/2. Its function is as follows. Catalyzes the formation of 6,7-dimethyl-8-ribityllumazine by condensation of 5-amino-6-(D-ribitylamino)uracil with 3,4-dihydroxy-2-butanone 4-phosphate. This is the penultimate step in the biosynthesis of riboflavin. This Helicobacter pylori (strain HPAG1) protein is 6,7-dimethyl-8-ribityllumazine synthase.